Reading from the N-terminus, the 400-residue chain is CCA-adding enzyme (400 aa).

ATP is bound by residues G27 and R30. Residues G27 and R30 each contribute to the CTP site. The Mg(2+) site is built by D40 and D42. ATP-binding residues include R111, D154, R157, R160, and R163. R111, D154, R157, R160, and R163 together coordinate CTP.

Belongs to the tRNA nucleotidyltransferase/poly(A) polymerase family. Bacterial CCA-adding enzyme type 3 subfamily. In terms of assembly, homodimer. Mg(2+) serves as cofactor.

It catalyses the reaction a tRNA precursor + 2 CTP + ATP = a tRNA with a 3' CCA end + 3 diphosphate. It carries out the reaction a tRNA with a 3' CCA end + 2 CTP + ATP = a tRNA with a 3' CCACCA end + 3 diphosphate. Its function is as follows. Catalyzes the addition and repair of the essential 3'-terminal CCA sequence in tRNAs without using a nucleic acid template. Adds these three nucleotides in the order of C, C, and A to the tRNA nucleotide-73, using CTP and ATP as substrates and producing inorganic pyrophosphate. tRNA 3'-terminal CCA addition is required both for tRNA processing and repair. Also involved in tRNA surveillance by mediating tandem CCA addition to generate a CCACCA at the 3' terminus of unstable tRNAs. While stable tRNAs receive only 3'-terminal CCA, unstable tRNAs are marked with CCACCA and rapidly degraded. The protein is CCA-adding enzyme of Bacillus pumilus (strain SAFR-032).